Reading from the N-terminus, the 226-residue chain is Endonuclease V (226 aa).

Mg(2+) is bound by residues Asp42 and Asp110.

Belongs to the endonuclease V family. Mg(2+) is required as a cofactor.

The protein resides in the cytoplasm. It carries out the reaction Endonucleolytic cleavage at apurinic or apyrimidinic sites to products with a 5'-phosphate.. In terms of biological role, DNA repair enzyme involved in the repair of deaminated bases. Selectively cleaves double-stranded DNA at the second phosphodiester bond 3' to a deoxyinosine leaving behind the intact lesion on the nicked DNA. This is Endonuclease V from Thermus thermophilus (strain ATCC BAA-163 / DSM 7039 / HB27).